A 414-amino-acid chain; its full sequence is Enolase (414 aa).

Glutamine 162 serves as a coordination point for (2R)-2-phosphoglycerate. Catalysis depends on glutamate 204, which acts as the Proton donor. Positions 239, 280, and 307 each coordinate Mg(2+). Residues lysine 332, arginine 361, serine 362, and lysine 383 each coordinate (2R)-2-phosphoglycerate. Lysine 332 functions as the Proton acceptor in the catalytic mechanism.

It belongs to the enolase family. Requires Mg(2+) as cofactor.

The protein resides in the cytoplasm. The protein localises to the secreted. It is found in the cell surface. It carries out the reaction (2R)-2-phosphoglycerate = phosphoenolpyruvate + H2O. It functions in the pathway carbohydrate degradation; glycolysis; pyruvate from D-glyceraldehyde 3-phosphate: step 4/5. In terms of biological role, catalyzes the reversible conversion of 2-phosphoglycerate (2-PG) into phosphoenolpyruvate (PEP). It is essential for the degradation of carbohydrates via glycolysis. The polypeptide is Enolase (Campylobacter jejuni subsp. jejuni serotype O:6 (strain 81116 / NCTC 11828)).